The following is a 352-amino-acid chain: 4-hydroxy-3-methylbut-2-en-1-yl diphosphate synthase (flavodoxin) (352 aa).

4 residues coordinate [4Fe-4S] cluster: Cys265, Cys268, Cys300, and Glu307.

This sequence belongs to the IspG family. The cofactor is [4Fe-4S] cluster.

The enzyme catalyses (2E)-4-hydroxy-3-methylbut-2-enyl diphosphate + oxidized [flavodoxin] + H2O + 2 H(+) = 2-C-methyl-D-erythritol 2,4-cyclic diphosphate + reduced [flavodoxin]. It functions in the pathway isoprenoid biosynthesis; isopentenyl diphosphate biosynthesis via DXP pathway; isopentenyl diphosphate from 1-deoxy-D-xylulose 5-phosphate: step 5/6. Functionally, converts 2C-methyl-D-erythritol 2,4-cyclodiphosphate (ME-2,4cPP) into 1-hydroxy-2-methyl-2-(E)-butenyl 4-diphosphate. This is 4-hydroxy-3-methylbut-2-en-1-yl diphosphate synthase (flavodoxin) from Persephonella marina (strain DSM 14350 / EX-H1).